The following is a 749-amino-acid chain: Putative Xaa-Pro aminopeptidase FRA1 (749 aa).

Residues 1–33 (MTSKPSTSDGRAHSISHVPGTHMRGTSASHSPR) are disordered. S69, S92, and S95 each carry phosphoserine. Residues D551, D562, E660, and E674 each coordinate Mn(2+).

Belongs to the peptidase M24B family. In terms of assembly, homodimer. Interacts with FRA2. Mn(2+) is required as a cofactor.

The protein resides in the cytoplasm. The catalysed reaction is Release of any N-terminal amino acid, including proline, that is linked to proline, even from a dipeptide or tripeptide.. Involved in the regulation of the iron regulon in responss to decreased mitochondrial iron-sulfur cluster synthesis. The polypeptide is Putative Xaa-Pro aminopeptidase FRA1 (FRA1) (Saccharomyces cerevisiae (strain ATCC 204508 / S288c) (Baker's yeast)).